We begin with the raw amino-acid sequence, 105 residues long: Synaptic plasticity regulator PANTS (105 aa).

The protein belongs to the UPF0545 family. As to quaternary structure, interacts with RTN4 isoform A/Nogo-A; the interaction results in enhanced RTN4-mediated inhibition of AMPA receptor clustering. Also interacts with NCAM1, RANBP2 and CCT8. Rapidly degraded by proteolysis following neuronal stimulation, resulting in increased AMPA receptor clustering.

Its subcellular location is the synapse. It localises to the synaptic cleft. In terms of biological role, negatively regulates long-term potentiation and modulates adult synaptic plasticity. Stabilizes the interaction of RTN4 isoform A/Nogo-A with its receptors, inhibiting clustering of postsynaptic AMPA receptors at synaptic sites. Upon neuronal stimulation, degraded at synapses, reducing RTN4 signaling and allowing AMPA receptor clustering at individual synapses. In Homo sapiens (Human), this protein is Synaptic plasticity regulator PANTS (C22orf39).